A 408-amino-acid polypeptide reads, in one-letter code: Peptidase T (408 aa).

His-78 provides a ligand contact to Zn(2+). Asp-80 is an active-site residue. Zn(2+) is bound at residue Asp-140. Glu-173 functions as the Proton acceptor in the catalytic mechanism. Zn(2+) contacts are provided by Glu-174, Asp-196, and His-379.

It belongs to the peptidase M20B family. It depends on Zn(2+) as a cofactor.

It is found in the cytoplasm. The enzyme catalyses Release of the N-terminal residue from a tripeptide.. In terms of biological role, cleaves the N-terminal amino acid of tripeptides. The protein is Peptidase T of Citrobacter koseri (strain ATCC BAA-895 / CDC 4225-83 / SGSC4696).